We begin with the raw amino-acid sequence, 345 residues long: Dihydroorotate dehydrogenase (quinone) (345 aa).

FMN is bound by residues 65–69 and Thr89; that span reads AGLDK. Lys69 contributes to the substrate binding site. Residue 114–118 coordinates substrate; the sequence is NRMGF. Asn142 and Asn175 together coordinate FMN. Residue Asn175 coordinates substrate. Ser178 functions as the Nucleophile in the catalytic mechanism. A substrate-binding site is contributed by Asn180. FMN contacts are provided by Lys220 and Thr248. 249-250 is a binding site for substrate; that stretch reads NT. FMN is bound by residues Gly271, Gly300, and 321–322; that span reads YT.

The protein belongs to the dihydroorotate dehydrogenase family. Type 2 subfamily. In terms of assembly, monomer. FMN is required as a cofactor.

It localises to the cell membrane. The catalysed reaction is (S)-dihydroorotate + a quinone = orotate + a quinol. It participates in pyrimidine metabolism; UMP biosynthesis via de novo pathway; orotate from (S)-dihydroorotate (quinone route): step 1/1. Catalyzes the conversion of dihydroorotate to orotate with quinone as electron acceptor. In Burkholderia mallei (strain NCTC 10247), this protein is Dihydroorotate dehydrogenase (quinone).